A 236-amino-acid polypeptide reads, in one-letter code: Small ribosomal subunit protein uS3 (236 aa).

The region spanning 39–107 (IREFLTEELK…DTSLNIVEVR (69 aa)) is the KH type-2 domain. The interval 214–236 (ASERRAVEGDNQGSSSNRRRENA) is disordered.

This sequence belongs to the universal ribosomal protein uS3 family. In terms of assembly, part of the 30S ribosomal subunit. Forms a tight complex with proteins S10 and S14.

Its function is as follows. Binds the lower part of the 30S subunit head. Binds mRNA in the 70S ribosome, positioning it for translation. The protein is Small ribosomal subunit protein uS3 of Brucella canis (strain ATCC 23365 / NCTC 10854 / RM-666).